A 94-amino-acid polypeptide reads, in one-letter code: Co-chaperonin GroES (94 aa).

The protein belongs to the GroES chaperonin family. In terms of assembly, heptamer of 7 subunits arranged in a ring. Interacts with the chaperonin GroEL.

The protein resides in the cytoplasm. Functionally, together with the chaperonin GroEL, plays an essential role in assisting protein folding. The GroEL-GroES system forms a nano-cage that allows encapsulation of the non-native substrate proteins and provides a physical environment optimized to promote and accelerate protein folding. GroES binds to the apical surface of the GroEL ring, thereby capping the opening of the GroEL channel. This chain is Co-chaperonin GroES, found in Clostridioides difficile (strain 630) (Peptoclostridium difficile).